Consider the following 204-residue polypeptide: Peptide deformylase (204 aa).

Positions 131 and 174 each coordinate Fe cation. E175 is a catalytic residue. A Fe cation-binding site is contributed by H178.

The protein belongs to the polypeptide deformylase family. It depends on Fe(2+) as a cofactor.

The catalysed reaction is N-terminal N-formyl-L-methionyl-[peptide] + H2O = N-terminal L-methionyl-[peptide] + formate. Functionally, removes the formyl group from the N-terminal Met of newly synthesized proteins. Requires at least a dipeptide for an efficient rate of reaction. N-terminal L-methionine is a prerequisite for activity but the enzyme has broad specificity at other positions. The polypeptide is Peptide deformylase (Streptococcus equi subsp. zooepidemicus (strain MGCS10565)).